The chain runs to 149 residues: UPF0179 protein Mbar_A0292 (149 aa).

The protein belongs to the UPF0179 family.

The sequence is that of UPF0179 protein Mbar_A0292 from Methanosarcina barkeri (strain Fusaro / DSM 804).